Here is a 421-residue protein sequence, read N- to C-terminus: CaM kinase-like vesicle-associated protein (421 aa).

The Protein kinase domain maps to 24 to 284 (YDLGQVVKSE…AQEAIAHEWI (261 aa)). Residues 326-421 (ASEQGDTGAS…PQMLPQRKGY (96 aa)) are disordered. 2 stretches are compositionally biased toward low complexity: residues 330 to 340 (GDTGASGLAAG) and 390 to 406 (QQQA…QQAR).

The protein belongs to the protein kinase superfamily. CAMK Ser/Thr protein kinase family. As to quaternary structure, interacts with calmodulin, in the presence of calcium. Ca(2+) serves as cofactor. In terms of tissue distribution, ubiquitously expressed.

The protein localises to the cytoplasmic vesicle membrane. In terms of biological role, does not appear to have detectable kinase activity. The chain is CaM kinase-like vesicle-associated protein (camkv) from Takifugu rubripes (Japanese pufferfish).